Consider the following 140-residue polypeptide: Small ribosomal subunit protein uS12 (140 aa).

A 3-methylthioaspartic acid modification is found at Asp-103. Residues 120 to 140 are disordered; that stretch reads GVQKRMQARSKYGAKRPKKGK. Positions 125–140 are enriched in basic residues; that stretch reads MQARSKYGAKRPKKGK.

The protein belongs to the universal ribosomal protein uS12 family. As to quaternary structure, part of the 30S ribosomal subunit. Contacts proteins S8 and S17. May interact with IF1 in the 30S initiation complex.

Its function is as follows. With S4 and S5 plays an important role in translational accuracy. Functionally, interacts with and stabilizes bases of the 16S rRNA that are involved in tRNA selection in the A site and with the mRNA backbone. Located at the interface of the 30S and 50S subunits, it traverses the body of the 30S subunit contacting proteins on the other side and probably holding the rRNA structure together. The combined cluster of proteins S8, S12 and S17 appears to hold together the shoulder and platform of the 30S subunit. The protein is Small ribosomal subunit protein uS12 of Desulfitobacterium hafniense (strain Y51).